The chain runs to 461 residues: Acetylcholine receptor subunit alpha (461 aa).

A signal peptide spans 1 to 24 (MILCSYWHVGLVLLLFSCCGLVLG). At 25–234 (SEHETRLVAN…ITYHFIMQRI (210 aa)) the chain is on the extracellular side. 2 disulfides stabilise this stretch: cysteine 152–cysteine 166 and cysteine 216–cysteine 217. N-linked (GlcNAc...) asparagine glycosylation is present at asparagine 165. A run of 3 helical transmembrane segments spans residues 235 to 259 (PLYFVVNVIIPCLLFSFLTVLVFYL), 267 to 285 (MTLSISVLLSLTVFLLVIV), and 301 to 320 (YMLFTMIFVISSIIVTVVVI). Over 321–432 (NTHHRSPSTH…WKYVAMVIDH (112 aa)) the chain is Cytoplasmic. The chain crosses the membrane as a helical span at residues 433 to 451 (ILLCVFMLICIIGTVSVFA).

It belongs to the ligand-gated ion channel (TC 1.A.9) family. Acetylcholine receptor (TC 1.A.9.1) subfamily. Alpha-1/CHRNA1 sub-subfamily. As to quaternary structure, pentamer of two alpha chains, and one each of the beta, delta, and gamma chains.

The protein localises to the postsynaptic cell membrane. It localises to the cell membrane. The catalysed reaction is K(+)(in) = K(+)(out). It catalyses the reaction Na(+)(in) = Na(+)(out). Upon acetylcholine binding, the AChR responds by an extensive change in conformation that affects all subunits and leads to opening of an ion-conducting channel across the plasma membrane. This chain is Acetylcholine receptor subunit alpha (CHRNA1), found in Torpedo marmorata (Marbled electric ray).